The primary structure comprises 297 residues: Phosphoribosylaminoimidazole-succinocarboxamide synthase (297 aa).

Belongs to the SAICAR synthetase family.

It catalyses the reaction 5-amino-1-(5-phospho-D-ribosyl)imidazole-4-carboxylate + L-aspartate + ATP = (2S)-2-[5-amino-1-(5-phospho-beta-D-ribosyl)imidazole-4-carboxamido]succinate + ADP + phosphate + 2 H(+). It functions in the pathway purine metabolism; IMP biosynthesis via de novo pathway; 5-amino-1-(5-phospho-D-ribosyl)imidazole-4-carboxamide from 5-amino-1-(5-phospho-D-ribosyl)imidazole-4-carboxylate: step 1/2. This Mycobacterium tuberculosis (strain ATCC 25177 / H37Ra) protein is Phosphoribosylaminoimidazole-succinocarboxamide synthase.